The sequence spans 116 residues: NADPH-dependent 7-cyano-7-deazaguanine reductase (116 aa).

Catalysis depends on Cys31, which acts as the Thioimide intermediate. The active-site Proton donor is the Asp38. Substrate is bound by residues 53–55 (IEL) and 72–73 (YE).

The protein belongs to the GTP cyclohydrolase I family. QueF type 1 subfamily.

The protein localises to the cytoplasm. It carries out the reaction 7-aminomethyl-7-carbaguanine + 2 NADP(+) = 7-cyano-7-deazaguanine + 2 NADPH + 3 H(+). It functions in the pathway tRNA modification; tRNA-queuosine biosynthesis. Catalyzes the NADPH-dependent reduction of 7-cyano-7-deazaguanine (preQ0) to 7-aminomethyl-7-deazaguanine (preQ1). This Chlorobaculum parvum (strain DSM 263 / NCIMB 8327) (Chlorobium vibrioforme subsp. thiosulfatophilum) protein is NADPH-dependent 7-cyano-7-deazaguanine reductase.